A 410-amino-acid polypeptide reads, in one-letter code: Arginine deiminase (410 aa).

The active-site Amidino-cysteine intermediate is the Cys400.

This sequence belongs to the arginine deiminase family.

It localises to the cytoplasm. The enzyme catalyses L-arginine + H2O = L-citrulline + NH4(+). Its pathway is amino-acid degradation; L-arginine degradation via ADI pathway; carbamoyl phosphate from L-arginine: step 1/2. The chain is Arginine deiminase from Bacillus thuringiensis subsp. konkukian (strain 97-27).